The chain runs to 20 residues: Unknown protein NF045 from 2D-PAGE (20 aa).

The sequence is that of Unknown protein NF045 from 2D-PAGE from Naegleria fowleri (Brain eating amoeba).